Here is a 579-residue protein sequence, read N- to C-terminus: Glucose starvation modulator protein 1 (579 aa).

The segment at residues 20–48 is a DNA-binding region (zn(2)-C6 fungal-type); sequence CVFCHEKHLQCDLGRPCQNCSKRGIGDTC. Over residues 43–53 the composition is skewed to basic and acidic residues; sequence GIGDTCRDKER. Disordered regions lie at residues 43–75 and 319–342; these read GIGDTCRDKERKPRKRGPRKVKKEREVSASTKS and QMASESKRHSANDTSPESQGGETV. Basic residues predominate over residues 54-64; it reads KPRKRGPRKVK. Residues 330 to 339 are compositionally biased toward polar residues; it reads NDTSPESQGG. Residues 444 to 516 enclose the PAS domain; the sequence is LLEYESMAKL…DIFHEYLAFG (73 aa).

It belongs to the ERT1/acuK family.

It localises to the nucleus. Its function is as follows. Transcription factor which regulates nonfermentable carbon utilization. This Kluyveromyces lactis (strain ATCC 8585 / CBS 2359 / DSM 70799 / NBRC 1267 / NRRL Y-1140 / WM37) (Yeast) protein is Glucose starvation modulator protein 1 (GSM1).